The chain runs to 561 residues: Potassium-transporting ATPase potassium-binding subunit (561 aa).

The next 11 helical transmembrane spans lie at 5 to 25 (LAAG…YVPL), 60 to 80 (CGYA…LYVL), 86 to 106 (VLPL…NTAV), 131 to 151 (GLAV…VALI), 177 to 197 (ILLP…VIQS), 247 to 267 (PTPL…VALT), 281 to 301 (LTVL…TTAA), 376 to 396 (GLYG…LLVG), 415 to 435 (ALAV…TVVL), 489 to 509 (LGLC…ALAG), and 531 to 551 (FAGL…FPVL).

The protein belongs to the KdpA family. As to quaternary structure, the system is composed of three essential subunits: KdpA, KdpB and KdpC.

The protein resides in the cell membrane. In terms of biological role, part of the high-affinity ATP-driven potassium transport (or Kdp) system, which catalyzes the hydrolysis of ATP coupled with the electrogenic transport of potassium into the cytoplasm. This subunit binds the extracellular potassium ions and delivers the ions to the membrane domain of KdpB through an intramembrane tunnel. This chain is Potassium-transporting ATPase potassium-binding subunit, found in Nocardia farcinica (strain IFM 10152).